Reading from the N-terminus, the 148-residue chain is MSIIDNRKAFFDYHIEERYEAGLVLEGWEVKALRAGRGQIKEGYVVVKNAEIFLIGTHISPLPEASTHIKPDPVRTRKLLLHRDEIKKLIGKVEQRGYTLVPLNFHYKGGRVKCEIGLAKGKKLHDKRETEKKRDWEREKARIMRSAT.

Residues 123-148 (KLHDKRETEKKRDWEREKARIMRSAT) form a disordered region. Basic and acidic residues predominate over residues 126–142 (DKRETEKKRDWEREKAR).

This sequence belongs to the SmpB family.

Its subcellular location is the cytoplasm. In terms of biological role, required for rescue of stalled ribosomes mediated by trans-translation. Binds to transfer-messenger RNA (tmRNA), required for stable association of tmRNA with ribosomes. tmRNA and SmpB together mimic tRNA shape, replacing the anticodon stem-loop with SmpB. tmRNA is encoded by the ssrA gene; the 2 termini fold to resemble tRNA(Ala) and it encodes a 'tag peptide', a short internal open reading frame. During trans-translation Ala-aminoacylated tmRNA acts like a tRNA, entering the A-site of stalled ribosomes, displacing the stalled mRNA. The ribosome then switches to translate the ORF on the tmRNA; the nascent peptide is terminated with the 'tag peptide' encoded by the tmRNA and targeted for degradation. The ribosome is freed to recommence translation, which seems to be the essential function of trans-translation. In Burkholderia thailandensis (strain ATCC 700388 / DSM 13276 / CCUG 48851 / CIP 106301 / E264), this protein is SsrA-binding protein.